The following is a 363-amino-acid chain: MQCVWTLSLLQLVALWANAAVLTENGLPILWDQAPSQLSDLPQADDVVTINPWNSLQRMSLYRILVGSTDKYMASMGTNDSASPLWGLPLQLAWKVRSGRLVDPTGATTCGQEGDPMCISTNSWWACVNYYLSVIPFLAAVQKGLIGDGLIQVQVQAPAEAAEDSCTSYTDCSAKYPDLMAKWEEFFQTLKDVSASEISDFEKRDQILGAFWAGETLSLNTASSSCKAKMSYYSSPEVAFAKSWMNAADYVAAAYFQSSLNNSVLFMGPLPSRVLQEGDSAPNIADLSTEENHTLYIFGWMNRMNTILLGSPVKMWRSAMCSDKAREKGRELLQNLILDPKFAVSTFVSILTEMTRSCTGLST.

The N-terminal stretch at 1–19 (MQCVWTLSLLQLVALWANA) is a signal peptide. N-linked (GlcNAc...) asparagine glycosylation is found at N79, N261, and N292.

Belongs to the LEG1 family.

The protein resides in the secreted. Its function is as follows. May be involved in early liver development. The protein is Protein LEG1 homolog of Oncorhynchus mykiss (Rainbow trout).